The sequence spans 285 residues: ATP synthase gamma chain (285 aa).

This sequence belongs to the ATPase gamma chain family. As to quaternary structure, F-type ATPases have 2 components, CF(1) - the catalytic core - and CF(0) - the membrane proton channel. CF(1) has five subunits: alpha(3), beta(3), gamma(1), delta(1), epsilon(1). CF(0) has three main subunits: a, b and c.

The protein resides in the cell membrane. In terms of biological role, produces ATP from ADP in the presence of a proton gradient across the membrane. The gamma chain is believed to be important in regulating ATPase activity and the flow of protons through the CF(0) complex. The sequence is that of ATP synthase gamma chain from Exiguobacterium sp. (strain ATCC BAA-1283 / AT1b).